The primary structure comprises 215 residues: 3-isopropylmalate dehydratase small subunit (215 aa).

It belongs to the LeuD family. LeuD type 1 subfamily. In terms of assembly, heterodimer of LeuC and LeuD.

The enzyme catalyses (2R,3S)-3-isopropylmalate = (2S)-2-isopropylmalate. It participates in amino-acid biosynthesis; L-leucine biosynthesis; L-leucine from 3-methyl-2-oxobutanoate: step 2/4. In terms of biological role, catalyzes the isomerization between 2-isopropylmalate and 3-isopropylmalate, via the formation of 2-isopropylmaleate. In Hahella chejuensis (strain KCTC 2396), this protein is 3-isopropylmalate dehydratase small subunit.